We begin with the raw amino-acid sequence, 485 residues long: Glucagon receptor (485 aa).

An N-terminal signal peptide occupies residues 1–26 (MPLTQLHCPHLLLLLLVLSCLPEAPS). Residues 27-137 (AQVMDFLFEK…EIEVQKGVAK (111 aa)) lie on the Extracellular side of the membrane. 3 disulfide bridges follow: Cys44–Cys68, Cys59–Cys101, and Cys82–Cys122. Residues Asn47, Asn60, Asn75, Asn79, and Asn118 are each glycosylated (N-linked (GlcNAc...) asparagine). The helical transmembrane segment at 138–162 (MYSSQQVMYTVGYSLSLGALLLALV) threads the bilayer. The Cytoplasmic segment spans residues 163-174 (ILLGLRKLHCTR). The chain crosses the membrane as a helical span at residues 175 to 199 (NYIHGNLFASFVLKAGSVLVIDWLL). The Extracellular portion of the chain corresponds to 200–226 (KTRYSQKIGDDLSVSVWLSDGAMAGCR). Cys225 and Cys295 are joined by a disulfide. A helical membrane pass occupies residues 227–250 (VATVIMQYGIIANYCWLLVEGVYL). The Cytoplasmic segment spans residues 251–264 (YSLLSLATFSERSF). A helical transmembrane segment spans residues 265–286 (FSLYLGIGWGAPLLFVIPWVVV). Residues 287–304 (KCLFENVQCWTSNDNMGF) are Extracellular-facing. The chain crosses the membrane as a helical span at residues 305–327 (WWILRIPVFLALLINFFIFVHII). At 328 to 351 (HLLVAKLRAHQMHYADYKFRLARS) the chain is on the cytoplasmic side. The interval 351–354 (STLT) is important for allosteric inhibitor binding. Residues 352-370 (TLTLIPLLGVHEVVFAFVT) form a helical membrane-spanning segment. Residues 371–382 (DEHAQGTLRSTK) lie on the Extracellular side of the membrane. The helical transmembrane segment at 383–403 (LFFDLFLSSFQGLLVAVLYCF) threads the bilayer. Topologically, residues 404-485 (LNKEVQAELM…SLPRLADSPT (82 aa)) are cytoplasmic. Over residues 457–475 (AGSSSGTGCVPSMETSLAS) the composition is skewed to polar residues. Residues 457–485 (AGSSSGTGCVPSMETSLASSLPRLADSPT) form a disordered region. Residues Ser460 and Ser476 each carry the phosphoserine modification.

The protein belongs to the G-protein coupled receptor 2 family. In terms of processing, ligand-binding promotes phosphorylation of serine residues in the C-terminal cytoplasmic domain. Phosphorylation is important for receptor endocytosis after ligand-binding. As to expression, expressed predominantly in liver, kidney, adrenal, lung and stomach, while lower levels of expression are detected in brown and white adipose tissue, cerebellum, duodenum and heart.

It localises to the cell membrane. In terms of biological role, G-protein coupled receptor for glucagon that plays a central role in the regulation of blood glucose levels and glucose homeostasis. Regulates the rate of hepatic glucose production by promoting glycogen hydrolysis and gluconeogenesis. Plays an important role in mediating the responses to fasting. Ligand binding causes a conformation change that triggers signaling via guanine nucleotide-binding proteins (G proteins) and modulates the activity of down-stream effectors, such as adenylate cyclase. Promotes activation of adenylate cyclase. Besides, plays a role in signaling via a phosphatidylinositol-calcium second messenger system. This Mus musculus (Mouse) protein is Glucagon receptor (Gcgr).